The chain runs to 186 residues: Elongation factor P (186 aa).

Belongs to the elongation factor P family.

The protein localises to the cytoplasm. Its pathway is protein biosynthesis; polypeptide chain elongation. Involved in peptide bond synthesis. Stimulates efficient translation and peptide-bond synthesis on native or reconstituted 70S ribosomes in vitro. Probably functions indirectly by altering the affinity of the ribosome for aminoacyl-tRNA, thus increasing their reactivity as acceptors for peptidyl transferase. In Enterococcus faecalis (strain ATCC 700802 / V583), this protein is Elongation factor P.